Reading from the N-terminus, the 769-residue chain is Non-secreted LysM effector LysM17 (769 aa).

Residues 173 to 193 (LPPLATAIPLAVVWASLASVI) traverse the membrane as a helical segment. N-linked (GlcNAc...) asparagine glycosylation is found at N305, N368, N423, and N452. LysM domains are found at residues 498-543 (RTIQ…HVCC) and 562-610 (YSNL…KICL). 4 N-linked (GlcNAc...) asparagine glycosylation sites follow: N631, N671, N706, and N734.

This sequence belongs to the secreted LysM effector family.

Its subcellular location is the membrane. Non-secreted LysM effector that might be involved in manipulation of host defenses for successful infection. This chain is Non-secreted LysM effector LysM17, found in Penicillium expansum (Blue mold rot fungus).